The chain runs to 466 residues: Argininosuccinate lyase 1 (466 aa).

It belongs to the lyase 1 family. Argininosuccinate lyase subfamily.

The protein localises to the cytoplasm. The enzyme catalyses 2-(N(omega)-L-arginino)succinate = fumarate + L-arginine. It functions in the pathway amino-acid biosynthesis; L-arginine biosynthesis; L-arginine from L-ornithine and carbamoyl phosphate: step 3/3. The sequence is that of Argininosuccinate lyase 1 from Mesorhizobium japonicum (strain LMG 29417 / CECT 9101 / MAFF 303099) (Mesorhizobium loti (strain MAFF 303099)).